The following is a 288-amino-acid chain: Proteasome subunit beta (288 aa).

A propeptide spans 1 to 60 (MESNADWGSRGGLPQAFLTPGISSFSEFLKGFAPEYLPSGRPLPGGLGSASAAGDIAPHG) (removed in mature form; by autocatalysis). Thr61 (nucleophile) is an active-site residue.

Belongs to the peptidase T1B family. In terms of assembly, the 20S proteasome core is composed of 14 alpha and 14 beta subunits that assemble into four stacked heptameric rings, resulting in a barrel-shaped structure. The two inner rings, each composed of seven catalytic beta subunits, are sandwiched by two outer rings, each composed of seven alpha subunits. The catalytic chamber with the active sites is on the inside of the barrel. Has a gated structure, the ends of the cylinder being occluded by the N-termini of the alpha-subunits. Is capped by the proteasome-associated ATPase, ARC.

The protein localises to the cytoplasm. It carries out the reaction Cleavage of peptide bonds with very broad specificity.. It functions in the pathway protein degradation; proteasomal Pup-dependent pathway. With respect to regulation, the formation of the proteasomal ATPase ARC-20S proteasome complex, likely via the docking of the C-termini of ARC into the intersubunit pockets in the alpha-rings, may trigger opening of the gate for substrate entry. Interconversion between the open-gate and close-gate conformations leads to a dynamic regulation of the 20S proteasome proteolysis activity. Its function is as follows. Component of the proteasome core, a large protease complex with broad specificity involved in protein degradation. The protein is Proteasome subunit beta of Catenulispora acidiphila (strain DSM 44928 / JCM 14897 / NBRC 102108 / NRRL B-24433 / ID139908).